The chain runs to 470 residues: FAD-dependent monooxygenase SAT7 (470 aa).

Residues 28–48 (GLSVAIVGGGIVGIALALGLV) traverse the membrane as a helical segment. Glutamate 58, alanine 71, and arginine 143 together coordinate FAD. Residues arginine 227 and tyrosine 260 contribute to the active site. FAD-binding residues include aspartate 351 and alanine 364.

It belongs to the paxM FAD-dependent monooxygenase family. FAD serves as cofactor.

The protein localises to the membrane. It functions in the pathway mycotoxin biosynthesis. Its function is as follows. FAD-dependent monooxygenase; part of the satratoxin SC1 cluster involved in the biosynthesis of satratoxins, trichothecene mycotoxins that are associated with human food poisonings. Satratoxins are suggested to be made by products of multiple gene clusters (SC1, SC2 and SC3) that encode 21 proteins in all, including polyketide synthases, acetyltransferases, and other enzymes expected to modify the trichothecene skeleton. SC1 encodes 10 proteins, SAT1 to SAT10. The largest are SAT8, which encodes a putative polyketide synthase (PKS) with a conventional non-reducing architecture, and SAT10, a putative protein containing four ankyrin repeats and thus may be involved in protein scaffolding. The putative short-chain reductase SAT3 may assist the PKS in some capacity. SAT6 contains a secretory lipase domain and acts probably as a trichothecene esterase. SAT5 encodes a putative acetyltransferase, and so, with SAT6, may affect endogenous protection from toxicity. The probable transcription factor SAT9 may regulate the expression of the SC1 cluster. SC2 encodes proteins SAT11 to SAT16, the largest of which encodes the putative reducing PKS SAT13. SAT11 is a cytochrome P450 monooxygenase, while SAT14 and SAT16 are probable acetyltransferases. The SC2 cluster may be regulated by the transcription factor SAT15. SC3 is a small cluster that encodes 5 proteins, SAT17 to SAT21. SAT21 is a putative MFS-type transporter which may have a role in exporting secondary metabolites. The four other proteins putatively encoded in SC3 include the taurine hydroxylase-like protein SAT17, the O-methyltransferase SAT18, the acetyltransferase SAT19, and the Cys6-type zinc finger SAT20, the latter being probably involved in regulation of SC3 expression. The sequence is that of FAD-dependent monooxygenase SAT7 from Stachybotrys chartarum (strain CBS 109288 / IBT 7711) (Toxic black mold).